A 219-amino-acid polypeptide reads, in one-letter code: Large ribosomal subunit protein uL3 (219 aa).

Residues 134–153 (RASHGNSRSHNVPGSIGMAQ) form a disordered region. Gln153 carries the post-translational modification N5-methylglutamine.

This sequence belongs to the universal ribosomal protein uL3 family. As to quaternary structure, part of the 50S ribosomal subunit. Forms a cluster with proteins L14 and L19. Methylated by PrmB.

Functionally, one of the primary rRNA binding proteins, it binds directly near the 3'-end of the 23S rRNA, where it nucleates assembly of the 50S subunit. This is Large ribosomal subunit protein uL3 from Paraburkholderia phytofirmans (strain DSM 17436 / LMG 22146 / PsJN) (Burkholderia phytofirmans).